A 257-amino-acid polypeptide reads, in one-letter code: Diacetyl reductase [(S)-acetoin forming] (257 aa).

An NAD(+)-binding site is contributed by 6–30; the sequence is IITGAAGGLGKGIAERLANDGFNIV. Substrate is bound at residue serine 139. The active-site Proton acceptor is the tyrosine 152. Residue lysine 156 is part of the active site.

This sequence belongs to the short-chain dehydrogenases/reductases (SDR) family.

It catalyses the reaction (S)-acetoin + NAD(+) = diacetyl + NADH + H(+). In terms of biological role, catalyzes the irreversible reduction of 2,3-butanediol to (S)-acetoin in the presence of NADH. The polypeptide is Diacetyl reductase [(S)-acetoin forming] (butA) (Staphylococcus epidermidis (strain ATCC 12228 / FDA PCI 1200)).